A 492-amino-acid chain; its full sequence is 3-octaprenyl-4-hydroxybenzoate carboxy-lyase (492 aa).

Position 172 (asparagine 172) interacts with Mn(2+). Prenylated FMN contacts are provided by residues 175-177 (IYR), 189-191 (RWL), and 194-195 (RG). Glutamate 238 is a binding site for Mn(2+). Residue aspartate 287 is the Proton donor of the active site.

This sequence belongs to the UbiD family. In terms of assembly, homohexamer. Prenylated FMN is required as a cofactor. Mn(2+) serves as cofactor.

The protein resides in the cell membrane. The catalysed reaction is a 4-hydroxy-3-(all-trans-polyprenyl)benzoate + H(+) = a 2-(all-trans-polyprenyl)phenol + CO2. The protein operates within cofactor biosynthesis; ubiquinone biosynthesis. In terms of biological role, catalyzes the decarboxylation of 3-octaprenyl-4-hydroxy benzoate to 2-octaprenylphenol, an intermediate step in ubiquinone biosynthesis. In Pasteurella multocida (strain Pm70), this protein is 3-octaprenyl-4-hydroxybenzoate carboxy-lyase.